The chain runs to 601 residues: Alpha-terpineol synthase, chloroplastic (601 aa).

The transit peptide at 1–47 (MSTISIHHVGILRNPLHSKSKRASINKPWSLSLPRSSSASRLVEPCR) directs the protein to the chloroplast. Mn(2+)-binding residues include aspartate 357 and aspartate 361. Residues 357–361 (DDVYD) carry the DDXXD motif motif. Homodimerization stretches follow at residues 363–369 (YGTLDEL) and 435–471 (EAEW…ELSL). 2 residues coordinate Mn(2+): aspartate 499 and glutamate 507.

It belongs to the terpene synthase family. In terms of assembly, homodimer. Requires Mn(2+) as cofactor. The cofactor is Mg(2+).

Its subcellular location is the plastid. It is found in the chloroplast. The enzyme catalyses (2E)-geranyl diphosphate + H2O = (S)-alpha-terpineol + diphosphate. It carries out the reaction (2E)-geranyl diphosphate + H2O = (R)-alpha-terpineol + diphosphate. The protein operates within secondary metabolite biosynthesis; terpenoid biosynthesis. Involved in the biosynthesis of phenolic monoterpenes natural products. Monoterpene synthase which catalyzes the conversion of geranyl diphosphate (GPP) to alpha-terpineol (isomer is not determined). In Thymus caespititius (Cretan thyme), this protein is Alpha-terpineol synthase, chloroplastic.